The primary structure comprises 119 residues: Ornithodorin (119 aa).

Residues 1–53 (LNVLCNNPHTADCNNDAQVDRYFREGTTCLMSPACTSEGYASQHECQQACFVG) enclose the BPTI/Kunitz inhibitor 1 domain. Disulfide bonds link Cys-5–Cys-50, Cys-13–Cys-35, and Cys-29–Cys-46. A linker region spans residues 54–60 (GEDHSSE). The region spanning 61–116 (MHSSCLGDPPTSCAEGTDITYYDSDSKTCKVLAASCPSGENTFESEVECQVACGAP) is the BPTI/Kunitz inhibitor 2 domain. Cystine bridges form between Cys-65–Cys-113, Cys-73–Cys-96, and Cys-89–Cys-109.

In terms of tissue distribution, expressed in salivary glands.

The protein resides in the cytoplasmic vesicle. The protein localises to the secretory vesicle. It localises to the secreted. In terms of biological role, tick salivary thrombin inhibitor that plays an important part in the anti-hemostatic strategy of ticks. Is a potent and highly selective thrombin inhibitor (Ki=10 pM). The chain is Ornithodorin from Ornithodoros moubata (Soft tick).